A 276-amino-acid chain; its full sequence is Non-heme chloroperoxidase (276 aa).

An AB hydrolase-1 domain is found at 24-254 (PVVFHHGWPL…NATLKSYEGL (231 aa)). Catalysis depends on residues Ser-97, Asp-227, and His-256.

It belongs to the AB hydrolase superfamily. Bacterial non-heme haloperoxidase / perhydrolase family. In terms of assembly, homodimer.

The sequence is that of Non-heme chloroperoxidase (cpo) from Streptomyces lividans.